Consider the following 329-residue polypeptide: tRNA(Ile)-lysidine synthase (329 aa).

37–42 (SGGSDS) contributes to the ATP binding site.

It belongs to the tRNA(Ile)-lysidine synthase family.

The protein localises to the cytoplasm. The enzyme catalyses cytidine(34) in tRNA(Ile2) + L-lysine + ATP = lysidine(34) in tRNA(Ile2) + AMP + diphosphate + H(+). Functionally, ligates lysine onto the cytidine present at position 34 of the AUA codon-specific tRNA(Ile) that contains the anticodon CAU, in an ATP-dependent manner. Cytidine is converted to lysidine, thus changing the amino acid specificity of the tRNA from methionine to isoleucine. This is tRNA(Ile)-lysidine synthase from Zymomonas mobilis subsp. mobilis (strain ATCC 31821 / ZM4 / CP4).